The primary structure comprises 418 residues: Gamma-glutamyl phosphate reductase (418 aa).

Belongs to the gamma-glutamyl phosphate reductase family.

Its subcellular location is the cytoplasm. It catalyses the reaction L-glutamate 5-semialdehyde + phosphate + NADP(+) = L-glutamyl 5-phosphate + NADPH + H(+). It participates in amino-acid biosynthesis; L-proline biosynthesis; L-glutamate 5-semialdehyde from L-glutamate: step 2/2. Its function is as follows. Catalyzes the NADPH-dependent reduction of L-glutamate 5-phosphate into L-glutamate 5-semialdehyde and phosphate. The product spontaneously undergoes cyclization to form 1-pyrroline-5-carboxylate. The polypeptide is Gamma-glutamyl phosphate reductase (Geobacter sp. (strain M21)).